The following is a 264-amino-acid chain: Probable aquaporin TIP3-1 (264 aa).

A run of 2 helical transmembrane segments spans residues 28–48 (AAISEFLATAIFVFAAEGSIL) and 62–82 (GLVAVSLAHALALAVAVAVAV). The NPA 1 motif lies at 90 to 92 (NPA). The next 3 membrane-spanning stretches (helical) occupy residues 105 to 125 (LIRALFYWLAQLLGAVVATLL), 149 to 169 (AVLLEATMTFGLMYAYYATVI), and 176 to 196 (VGTIAPLAVGFLLGANMLAGG). Positions 204-206 (NPA) match the NPA 2 motif. A helical transmembrane segment spans residues 224–244 (YWLGPFVGAGLAGLLYEYLVI).

Belongs to the MIP/aquaporin (TC 1.A.8) family. TIP (TC 1.A.8.10) subfamily. Expressed in leaves and at lower levels in roots.

The protein resides in the vacuole membrane. Functionally, aquaporins facilitate the transport of water and small neutral solutes across cell membranes. May be involved in transport from the vacuolar compartment to the cytoplasm. The chain is Probable aquaporin TIP3-1 (TIP3-1) from Oryza sativa subsp. japonica (Rice).